Here is a 294-residue protein sequence, read N- to C-terminus: UPF0761 membrane protein MADE_1017605/MADE_1018330 (294 aa).

6 helical membrane passes run 45-65 (LLSL…FPAF), 99-119 (ASQM…MLIS), 141-161 (FAIY…SVVV), 182-202 (FLLS…LYMV), 213-233 (AFVG…GFAL), and 247-267 (ALAV…IVLF).

The protein belongs to the UPF0761 family.

Its subcellular location is the cell inner membrane. This is UPF0761 membrane protein MADE_1017605/MADE_1018330 from Alteromonas mediterranea (strain DSM 17117 / CIP 110805 / LMG 28347 / Deep ecotype).